A 5641-amino-acid chain; its full sequence is Cyclochlorotine synthetase (5641 aa).

Residues 95–124 (PENLNGHLIGSTNGHKKQWENDSADDKRGQ) are disordered. The span at 111–124 (KQWENDSADDKRGQ) shows a compositional bias: basic and acidic residues. Residues 217–622 (FTENVQRYPT…GRRDTQVKIR (406 aa)) form an adenylation (A) domain 1 region. Positions 816–892 (TEEEYKIQTL…DLVSNCKMSA (77 aa)) constitute a Carrier 1 domain. The thiolation (T) domain 1 stretch occupies residues 821–889 (KIQTLKEIWS…QLSDLVSNCK (69 aa)). Ser853 carries the O-(pantetheine 4'-phosphoryl)serine modification. The condensation (C) domain 1 stretch occupies residues 926–1333 (EDVYPCTPLQ…AHVAEQIGQP (408 aa)). The adenylation (A) domain 2 stretch occupies residues 1390-1768 (DGNLTFEELN…ISRATTQIKI (379 aa)). Positions 1902–1978 (IELSEKQENM…QLVMIATELT (77 aa)) constitute a Carrier 2 domain. The interval 1907-1975 (KQENMARLWA…RFDQLVMIAT (69 aa)) is thiolation (T) domain 2. O-(pantetheine 4'-phosphoryl)serine is present on Ser1939. The tract at residues 2022–2438 (DIYACTPFQE…DLASEQDLAK (417 aa)) is condensation (C) domain 2. An adenylation (A) domain 3 region spans residues 2459–2859 (AEKARQHPNK…GRADTQVKLR (401 aa)). A Carrier 3 domain is found at 2976 to 3052 (GPLTEMETTL…GMAIKIQPIH (77 aa)). Residues 2977–3049 (PLTEMETTLA…NLAGMAIKIQ (73 aa)) form a thiolation (T) domain 3 region. Ser3013 bears the O-(pantetheine 4'-phosphoryl)serine mark. Residues 3089-3482 (DIYPCTPLQV…LETVLSAFST (394 aa)) form a condensation (C) domain 3 region. The segment at 3523 to 3873 (VQRAPDKVAI…IARKDLQVKL (351 aa)) is adenylation (A) domain 4. One can recognise a Carrier 4 domain in the interval 4005–4081 (IPSTPTEMKM…ELATKIAPRI (77 aa)). A thiolation (T) domain 4 region spans residues 4010–4078 (TEMKMQQLWA…RLSELATKIA (69 aa)). Ser4042 is modified (O-(pantetheine 4'-phosphoryl)serine). The condensation (C) domain 4 stretch occupies residues 4123–4549 (KDVYPCTPLQ…QSLDSLSQQD (427 aa)). Residues 4574–4982 (QEIAGRHPDA…GRIGTDIKLR (409 aa)) form an adenylation (A) domain 5 region. The region spanning 5118 to 5194 (PPSTQEEKVI…SLAEKISWES (77 aa)) is the Carrier 5 domain. Residues 5123 to 5191 (EEKVIAALWA…KLASLAEKIS (69 aa)) are thiolation (T) domain 5. Ser5155 carries the O-(pantetheine 4'-phosphoryl)serine modification. Residues 5260–5556 (AYLDIGPDVQ…DKCTTCVSGS (297 aa)) are condensation (C) domain 5.

This sequence belongs to the NRP synthetase family.

The protein operates within mycotoxin biosynthesis. Nonribosomal peptide synthetase; part of the gene cluster that mediates the biosynthesis of the mycotoxin cyclochlorotine, a hepatotoxic and carcinogenic cyclic chlorinated pentapeptide. Within the pathway, The NRPS cctN initially catalyzes the condensation of L-serine (Ser), Pro, L-2-aminobutyrate (2Abu), Ser, and beta-Phe in this order. During the chain elongation, side-chain hydroxy group of Ser4 would be used as a nucleophile, giving isocyclotine as a product of terminal condensation-like (CT) domain-catalyzed cyclization. After the dichlorination of Pro2 catalyzed by cctP2 to produce isocyclochlorotine, the cctO-mediated transacylation of isocyclochlorotine can furnish cyclochlorotine. The subsequent hydroxylation of cyclochlorotine by cctR yields hydroxycyclochlorotine as the final product. CctP1 probably acts as a phenylalanine aminomutase and provides the uncommon building block beta-Phe. Furthermore, 2Abu can be synthesized from threonine by one of the threonine dehydratases and transaminases localized outside of the cluster. The functions of the remaining proteins encoded by the cluster, cctM and cctT, have not been identified yet. This chain is Cyclochlorotine synthetase, found in Talaromyces islandicus (Penicillium islandicum).